A 221-amino-acid polypeptide reads, in one-letter code: Guanylate kinase (221 aa).

The 179-residue stretch at 20–198 (GSLFMVVAPS…ALAELRTVVQ (179 aa)) folds into the Guanylate kinase-like domain. Position 27 to 34 (27 to 34 (APSGAGKS)) interacts with ATP.

This sequence belongs to the guanylate kinase family.

It localises to the cytoplasm. It catalyses the reaction GMP + ATP = GDP + ADP. Essential for recycling GMP and indirectly, cGMP. In Ralstonia nicotianae (strain ATCC BAA-1114 / GMI1000) (Ralstonia solanacearum), this protein is Guanylate kinase.